We begin with the raw amino-acid sequence, 259 residues long: Troponin T, fast skeletal muscle (259 aa).

The segment covering 1 to 36 (MSDEETEQVEEQYEEEEEAQEEEVQEEAPEPEEVQE) has biased composition (acidic residues). Residues 1–62 (MSDEETEQVE…EKVDFDDIQK (62 aa)) form a disordered region. S2 carries the post-translational modification N-acetylserine. S2 carries the post-translational modification Phosphoserine. Positions 50–62 (PEGEKVDFDDIQK) are enriched in basic and acidic residues. S78 carries the post-translational modification Phosphoserine. A compositionally biased stretch (basic and acidic residues) spans 101–143 (RAERAEQQRIRAEKERERQNRLAEEKARREEEDAKRRAEDDLK). Residues 101-180 (RAERAEQQRI…TAREMKKKIL (80 aa)) form a disordered region. Residues S149, S156, and S157 each carry the phosphoserine modification. Positions 171–180 (TAREMKKKIL) are enriched in basic and acidic residues. S193 bears the Phosphoserine mark. Y209 is subject to Phosphotyrosine. A disordered region spans residues 235–259 (RIDQAQKHSKKAGATAKGKVGGRWK).

The protein belongs to the troponin T family.

Functionally, troponin T is the tropomyosin-binding subunit of troponin, the thin filament regulatory complex which confers calcium-sensitivity to striated muscle actomyosin ATPase activity. In Rattus norvegicus (Rat), this protein is Troponin T, fast skeletal muscle (Tnnt3).